The primary structure comprises 346 residues: MLYRSALRASRSFTPRLASTNSRLVSSLVFLEHKAGKLNEASLSAVTAAKTLGNDTHGLLVGTKSEIENVLDRTKEIKDLSKIYLATSDTYSHSLAEPLASLLASIASAKDVSHIFAAHTAVGKNIFPRLAGLLDTSLIADIIALESSGDTFTRPIYAGNAVLTIKSSPKDSVKVVTVRSTAFDKAAVANGSAAVEDVDIITVDTPTQFVSEELTVSSRPDLASAARVVSGGRALKSKESFDTILDPLADSLGAAVGASRAAVDAGYADNSLQVGQTGKVVAPELYVAIGISGAIQHLAGMKESKMIIAINKDPDAPIFQVADVGLVADLFESVPQLVKEIDNVKV.

Residue 285–313 coordinates FAD; that stretch reads LYVAIGISGAIQHLAGMKESKMIIAINKD.

It belongs to the ETF alpha-subunit/FixB family. Heterodimer of an alpha and a beta subunit. It depends on FAD as a cofactor.

It localises to the mitochondrion matrix. In terms of biological role, the electron transfer flavoprotein serves as a specific electron acceptor for several dehydrogenases, including five acyl-CoA dehydrogenases, glutaryl-CoA and sarcosine dehydrogenase. It transfers the electrons to the main mitochondrial respiratory chain via ETF-ubiquinone oxidoreductase (ETF dehydrogenase). In Cryptococcus neoformans var. neoformans serotype D (strain B-3501A) (Filobasidiella neoformans), this protein is Probable electron transfer flavoprotein subunit alpha, mitochondrial (ETF1).